The following is a 506-amino-acid chain: Maturase K (506 aa).

This sequence belongs to the intron maturase 2 family. MatK subfamily.

The protein resides in the plastid. It is found in the chloroplast. Functionally, usually encoded in the trnK tRNA gene intron. Probably assists in splicing its own and other chloroplast group II introns. This chain is Maturase K, found in Rhododendron tsusiophyllum (Rhododendron).